Consider the following 161-residue polypeptide: Nucleotide-binding protein Mmwyl1_2033 (161 aa).

Belongs to the YajQ family.

In terms of biological role, nucleotide-binding protein. This Marinomonas sp. (strain MWYL1) protein is Nucleotide-binding protein Mmwyl1_2033.